We begin with the raw amino-acid sequence, 527 residues long: Pyruvate kinase 1, cytosolic (527 aa).

Arg-58 is a substrate binding site. Asp-60, Ser-62, Asp-92, and Thr-93 together coordinate K(+). Residue 60-63 (DFSW) participates in ATP binding. Lys-256 contributes to the substrate binding site. Position 258 (Glu-258) interacts with Mg(2+). Substrate is bound by residues Gly-281, Asn-282, and Thr-313. Asn-282 is a binding site for Mg(2+).

The protein belongs to the pyruvate kinase family. Homotetramer. Mg(2+) is required as a cofactor. It depends on K(+) as a cofactor.

The protein localises to the cytoplasm. The protein resides in the cytosol. It catalyses the reaction pyruvate + ATP = phosphoenolpyruvate + ADP + H(+). It functions in the pathway carbohydrate degradation; glycolysis; pyruvate from D-glyceraldehyde 3-phosphate: step 5/5. Functionally, key regulatory enzyme of the glycolytic pathway that catalyzes the final step of glycolysis, converting ADP and phosphoenolpyruvate (PEP) to ATP and pyruvate by essentially irreversible transphosphorylation. Is critical for plant growth and development. This is Pyruvate kinase 1, cytosolic from Oryza sativa subsp. indica (Rice).